The primary structure comprises 475 residues: Adenylyl cyclase-associated protein 1 (475 aa).

The residue at position 2 (Ala2) is an N-acetylalanine. Tyr31 carries the phosphotyrosine modification. The residue at position 34 (Ser34) is a Phosphoserine. Lys81 carries the N6-acetyllysine modification. Disordered regions lie at residues 216–237 (ELSG…PPCP) and 278–319 (MKTH…KKEP). The segment covering 218–228 (SGLPSGPSAGS) has biased composition (low complexity). Lys287 bears the N6-methyllysine mark. 3 positions are modified to phosphoserine: Ser290, Ser295, and Ser301. Residue Thr307 is modified to Phosphothreonine. Ser308 and Ser310 each carry phosphoserine. One can recognise a C-CAP/cofactor C-like domain in the interval 319–453 (PAVLELEGKK…EGGDFNEFPV (135 aa)). Lys348 participates in a covalent cross-link: Glycyl lysine isopeptide (Lys-Gly) (interchain with G-Cter in SUMO1).

It belongs to the CAP family. As to quaternary structure, homodimer. Binds actin monomers.

It is found in the cell membrane. Functionally, directly regulates filament dynamics and has been implicated in a number of complex developmental and morphological processes, including mRNA localization and the establishment of cell polarity. This is Adenylyl cyclase-associated protein 1 (CAP1) from Homo sapiens (Human).